The following is a 187-amino-acid chain: Holliday junction resolvase (187 aa).

This sequence belongs to the RuvC family. Poxviruses-type subfamily. Requires Mg(2+) as cofactor. Acylated by palmitic acid group(s).

Its subcellular location is the membrane. Functionally, nuclease that specifically cleaves and resolves four-way DNA Holliday junctions into linear duplex products. This Vaccinia virus (strain Ankara) (VACV) protein is Holliday junction resolvase.